The primary structure comprises 196 residues: Adenylate kinase (196 aa).

Residue Gly-9–Thr-17 participates in ATP binding.

This sequence belongs to the archaeal adenylate kinase family.

The protein localises to the cytoplasm. It carries out the reaction AMP + ATP = 2 ADP. This Pyrococcus abyssi (strain GE5 / Orsay) protein is Adenylate kinase (adkA).